The chain runs to 90 residues: uncharacterized protein (90 aa).

A helical transmembrane segment spans residues 69–89 (LLYIFLGAMIVIIFLVIKNQL).

Belongs to the IIV-6 466R family.

It localises to the membrane. This is an uncharacterized protein from Invertebrate iridescent virus 6 (IIV-6).